Consider the following 351-residue polypeptide: Nicotinate-nucleotide--dimethylbenzimidazole phosphoribosyltransferase (351 aa).

Glutamate 317 (proton acceptor) is an active-site residue.

Belongs to the CobT family.

The catalysed reaction is 5,6-dimethylbenzimidazole + nicotinate beta-D-ribonucleotide = alpha-ribazole 5'-phosphate + nicotinate + H(+). The protein operates within nucleoside biosynthesis; alpha-ribazole biosynthesis; alpha-ribazole from 5,6-dimethylbenzimidazole: step 1/2. Catalyzes the synthesis of alpha-ribazole-5'-phosphate from nicotinate mononucleotide (NAMN) and 5,6-dimethylbenzimidazole (DMB). This Ectopseudomonas mendocina (strain ymp) (Pseudomonas mendocina) protein is Nicotinate-nucleotide--dimethylbenzimidazole phosphoribosyltransferase.